Consider the following 341-residue polypeptide: Probable electron transfer flavoprotein subunit alpha, mitochondrial (341 aa).

Residue 285-313 (LYIAVGIDGAIQHLAGIKDSKVIAAINRD) participates in FAD binding.

This sequence belongs to the ETF alpha-subunit/FixB family. As to quaternary structure, heterodimer of an alpha and a beta subunit. It depends on FAD as a cofactor.

The protein resides in the mitochondrion matrix. Functionally, the electron transfer flavoprotein serves as a specific electron acceptor for several dehydrogenases, including five acyl-CoA dehydrogenases, glutaryl-CoA and sarcosine dehydrogenase. It transfers the electrons to the main mitochondrial respiratory chain via ETF-ubiquinone oxidoreductase (ETF dehydrogenase). The sequence is that of Probable electron transfer flavoprotein subunit alpha, mitochondrial from Schizosaccharomyces pombe (strain 972 / ATCC 24843) (Fission yeast).